The primary structure comprises 216 residues: Cytidylate kinase (216 aa).

7–15 (GPAASGKGT) is an ATP binding site.

This sequence belongs to the cytidylate kinase family. Type 1 subfamily.

It is found in the cytoplasm. The catalysed reaction is CMP + ATP = CDP + ADP. It catalyses the reaction dCMP + ATP = dCDP + ADP. This chain is Cytidylate kinase, found in Methylocella silvestris (strain DSM 15510 / CIP 108128 / LMG 27833 / NCIMB 13906 / BL2).